The following is a 423-amino-acid chain: 3-phosphoshikimate 1-carboxyvinyltransferase (423 aa).

Lys21, Ser22, and Arg26 together coordinate 3-phosphoshikimate. Lys21 contributes to the phosphoenolpyruvate binding site. Phosphoenolpyruvate-binding residues include Gly92 and Arg120. Positions 166, 168, 194, 310, and 337 each coordinate 3-phosphoshikimate. Gln168 contributes to the phosphoenolpyruvate binding site. Asp310 (proton acceptor) is an active-site residue. Phosphoenolpyruvate contacts are provided by Arg341, Arg384, and Lys409.

It belongs to the EPSP synthase family. Monomer.

The protein resides in the cytoplasm. The catalysed reaction is 3-phosphoshikimate + phosphoenolpyruvate = 5-O-(1-carboxyvinyl)-3-phosphoshikimate + phosphate. The protein operates within metabolic intermediate biosynthesis; chorismate biosynthesis; chorismate from D-erythrose 4-phosphate and phosphoenolpyruvate: step 6/7. Functionally, catalyzes the transfer of the enolpyruvyl moiety of phosphoenolpyruvate (PEP) to the 5-hydroxyl of shikimate-3-phosphate (S3P) to produce enolpyruvyl shikimate-3-phosphate and inorganic phosphate. The protein is 3-phosphoshikimate 1-carboxyvinyltransferase of Syntrophobacter fumaroxidans (strain DSM 10017 / MPOB).